We begin with the raw amino-acid sequence, 269 residues long: 4-hydroxy-tetrahydrodipicolinate reductase (269 aa).

NAD(+) contacts are provided by residues 8–13 (GAAGRM) and Glu34. Arg35 provides a ligand contact to NADP(+). Residues 98–100 (GTT) and 122–125 (APNY) each bind NAD(+). His155 (proton donor/acceptor) is an active-site residue. His156 is a binding site for (S)-2,3,4,5-tetrahydrodipicolinate. The active-site Proton donor is Lys159. 165–166 (GT) contributes to the (S)-2,3,4,5-tetrahydrodipicolinate binding site.

Belongs to the DapB family.

It localises to the cytoplasm. The catalysed reaction is (S)-2,3,4,5-tetrahydrodipicolinate + NAD(+) + H2O = (2S,4S)-4-hydroxy-2,3,4,5-tetrahydrodipicolinate + NADH + H(+). The enzyme catalyses (S)-2,3,4,5-tetrahydrodipicolinate + NADP(+) + H2O = (2S,4S)-4-hydroxy-2,3,4,5-tetrahydrodipicolinate + NADPH + H(+). It participates in amino-acid biosynthesis; L-lysine biosynthesis via DAP pathway; (S)-tetrahydrodipicolinate from L-aspartate: step 4/4. Functionally, catalyzes the conversion of 4-hydroxy-tetrahydrodipicolinate (HTPA) to tetrahydrodipicolinate. The polypeptide is 4-hydroxy-tetrahydrodipicolinate reductase (Vibrio vulnificus (strain YJ016)).